The chain runs to 201 residues: 3-isopropylmalate dehydratase small subunit (201 aa).

Belongs to the LeuD family. LeuD type 1 subfamily. Heterodimer of LeuC and LeuD.

The catalysed reaction is (2R,3S)-3-isopropylmalate = (2S)-2-isopropylmalate. It functions in the pathway amino-acid biosynthesis; L-leucine biosynthesis; L-leucine from 3-methyl-2-oxobutanoate: step 2/4. In terms of biological role, catalyzes the isomerization between 2-isopropylmalate and 3-isopropylmalate, via the formation of 2-isopropylmaleate. In Methylorubrum extorquens (strain CM4 / NCIMB 13688) (Methylobacterium extorquens), this protein is 3-isopropylmalate dehydratase small subunit.